Consider the following 639-residue polypeptide: ATP-dependent rRNA helicase spb4 (639 aa).

Positions 14–42 match the Q motif motif; the sequence is WDAVTPPLSEWVLEAMSSMGFARMTPVQA. Residues 45 to 249 enclose the Helicase ATP-binding domain; the sequence is IPLFMAHKDV…RVGLRNPVKI (205 aa). 58–65 serves as a coordination point for ATP; that stretch reads AVTGSGKT. The DEAD box signature appears at 197-200; it reads DEAD. The region spanning 283 to 437 is the Helicase C-terminal domain; it reads ALKNILSSVQ…SISFSDADAT (155 aa). 2 disordered regions span residues 531–601 and 620–639; these read RKEL…ETKE and AAKAETAKAGGEDEEFKGFD. A coiled-coil region spans residues 561 to 624; it reads QNAENKNKKL…RFRQAAAKAE (64 aa). Residues 577 to 601 show a composition bias toward basic and acidic residues; it reads KLKQEKTKWENMTEEERQKARETKE.

This sequence belongs to the DEAD box helicase family. DDX55/SPB4 subfamily. In terms of assembly, component of pre-60S ribosomal complexes.

The protein localises to the nucleus. It is found in the nucleolus. It catalyses the reaction ATP + H2O = ADP + phosphate + H(+). ATP-binding RNA helicase involved in the biogenesis of 60S ribosomal subunits. Binds 90S pre-ribosomal particles and dissociates from pre-60S ribosomal particles after processing of 27SB pre-rRNA. Required for the normal formation of 18S rRNA through the processing of pre-rRNAs at sites A0, A1 and A2, and the normal formation of 25S and 5.8S rRNAs through the processing of pre-rRNAs at sites C1 and C2. The chain is ATP-dependent rRNA helicase spb4 from Aspergillus clavatus (strain ATCC 1007 / CBS 513.65 / DSM 816 / NCTC 3887 / NRRL 1 / QM 1276 / 107).